We begin with the raw amino-acid sequence, 356 residues long: UDP-N-acetylglucosamine--N-acetylmuramyl-(pentapeptide) pyrophosphoryl-undecaprenol N-acetylglucosamine transferase (356 aa).

Residues threonine 12–glycine 14, asparagine 124, arginine 163, serine 188, isoleucine 242, alanine 261–glutamate 266, and glutamine 287 contribute to the UDP-N-acetyl-alpha-D-glucosamine site.

The protein belongs to the glycosyltransferase 28 family. MurG subfamily.

The protein localises to the cell inner membrane. It carries out the reaction di-trans,octa-cis-undecaprenyl diphospho-N-acetyl-alpha-D-muramoyl-L-alanyl-D-glutamyl-meso-2,6-diaminopimeloyl-D-alanyl-D-alanine + UDP-N-acetyl-alpha-D-glucosamine = di-trans,octa-cis-undecaprenyl diphospho-[N-acetyl-alpha-D-glucosaminyl-(1-&gt;4)]-N-acetyl-alpha-D-muramoyl-L-alanyl-D-glutamyl-meso-2,6-diaminopimeloyl-D-alanyl-D-alanine + UDP + H(+). Its pathway is cell wall biogenesis; peptidoglycan biosynthesis. Functionally, cell wall formation. Catalyzes the transfer of a GlcNAc subunit on undecaprenyl-pyrophosphoryl-MurNAc-pentapeptide (lipid intermediate I) to form undecaprenyl-pyrophosphoryl-MurNAc-(pentapeptide)GlcNAc (lipid intermediate II). The sequence is that of UDP-N-acetylglucosamine--N-acetylmuramyl-(pentapeptide) pyrophosphoryl-undecaprenol N-acetylglucosamine transferase from Stutzerimonas stutzeri (strain A1501) (Pseudomonas stutzeri).